We begin with the raw amino-acid sequence, 323 residues long: Arginase, hepatic (323 aa).

Residues histidine 102, aspartate 125, histidine 127, and aspartate 129 each coordinate Mn(2+). Substrate is bound by residues 127 to 131 (HADIN), 138 to 140 (SGN), and aspartate 184. Aspartate 233 and aspartate 235 together coordinate Mn(2+). Substrate is bound by residues threonine 247 and glutamate 278.

This sequence belongs to the arginase family. In terms of assembly, homotrimer. Requires Mn(2+) as cofactor.

The enzyme catalyses L-arginine + H2O = urea + L-ornithine. It participates in nitrogen metabolism; urea cycle; L-ornithine and urea from L-arginine: step 1/1. In Aquarana catesbeiana (American bullfrog), this protein is Arginase, hepatic.